A 441-amino-acid chain; its full sequence is Transcription factor TOXE (441 aa).

A basic DNA-binding region region spans residues 14–40; it reads TDINERRKLQNRVAQRKYRTRQKTRMK. Residues 209-243 are disordered; sequence FEPNDQRKTENLPREPCGSCPSSSHGYSPTSGNPS. The span at 212–221 shows a compositional bias: basic and acidic residues; the sequence is NDQRKTENLP. Positions 228–241 are enriched in polar residues; the sequence is CPSSSHGYSPTSGN. 4 ANK repeats span residues 289 to 318, 322 to 351, 355 to 384, and 413 to 440; these read DQFSPLMTAISLGRLDIARILLQSGAPLDI, SGKTALHRAVGRRELHMVEALLNLGAEMLA, EGNSLLHIAVKTNSLSITRLLLERYKSCRE, and EGMTAVHLSVIFNRPEILQLLVKYSANV.

Belongs to the bZIP family. As to quaternary structure, monomer.

Its subcellular location is the nucleus. In terms of biological role, transcription factor, part of the diffuse TOX2 gene cluster that mediates the biosynthesis of the HC-toxin, cyclic tetrapeptide of structure cyclo(D-Pro-L-Ala-D-Ala-L-Aeo), where Aeo stands for 2-amino-9,10-epoxi-8-oxodecanoic acid. HC-toxin is a determinant of specificity and virulence in the interaction between the producing fungus and its host, maize. TOXE is a pathway-specific transcription factor which coordinates the expression of genes involved in HC-toxin biosynthesis. Binds to the tox-box, a 10-bp motif with the consensus 5'-ATCTCNCGNA-3', which is found in the promoter of all genes involved in HC-toxin biosynthesis. Required for pathogenicity of the fungus on maize. This chain is Transcription factor TOXE, found in Cochliobolus carbonum (Maize leaf spot fungus).